Reading from the N-terminus, the 330-residue chain is MISFSSFYKQISDSSLQHWLETLPSILGQWQREHKHGSLPKWEKVLNKLHYPEADIIDFKTSVKIGSGDQLSDGERQKLENLLAIFKPWRKGPYSLHGIEIDTEWRSDWKWERVVPHISPLENRTVLDVGCGSGYHMWRMLGEGAKHVVGIDPSPLFMCQFEAVKRLAGNEQPIHFLPLGIEELPALDAFDTVFSMGVLYHRRSPIDHIFQLRDQLRVGGELVLETLVIDGDENTVLMPTDRYGKMNNVWFLPSVEMLMLWLKKCDFTDIRCVDVDVTSLAEQRSTPWMPNESLVDYLDPNDVSLTVEGYPAPKRATIIATKNQPNKDLI.

Carboxy-S-adenosyl-L-methionine is bound by residues lysine 91, tryptophan 105, lysine 110, glycine 130, 152–154, 181–182, methionine 196, tyrosine 200, and arginine 315; these read DPS and IE.

The protein belongs to the class I-like SAM-binding methyltransferase superfamily. CmoB family. In terms of assembly, homotetramer.

The catalysed reaction is carboxy-S-adenosyl-L-methionine + 5-hydroxyuridine(34) in tRNA = 5-carboxymethoxyuridine(34) in tRNA + S-adenosyl-L-homocysteine + H(+). Its function is as follows. Catalyzes carboxymethyl transfer from carboxy-S-adenosyl-L-methionine (Cx-SAM) to 5-hydroxyuridine (ho5U) to form 5-carboxymethoxyuridine (cmo5U) at position 34 in tRNAs. The chain is tRNA U34 carboxymethyltransferase from Shewanella halifaxensis (strain HAW-EB4).